Here is a 343-residue protein sequence, read N- to C-terminus: Glycerol-3-phosphate dehydrogenase [NAD(P)+] (343 aa).

Residues S11, W12, H32, R33, and K106 each coordinate NADPH. Residues K106, G136, and S138 each contribute to the sn-glycerol 3-phosphate site. A140 is a binding site for NADPH. Positions 192, 245, 255, 256, and 257 each coordinate sn-glycerol 3-phosphate. The Proton acceptor role is filled by K192. R256 is a binding site for NADPH. Residues V280 and E282 each coordinate NADPH.

Belongs to the NAD-dependent glycerol-3-phosphate dehydrogenase family.

Its subcellular location is the cytoplasm. The enzyme catalyses sn-glycerol 3-phosphate + NAD(+) = dihydroxyacetone phosphate + NADH + H(+). The catalysed reaction is sn-glycerol 3-phosphate + NADP(+) = dihydroxyacetone phosphate + NADPH + H(+). Its pathway is membrane lipid metabolism; glycerophospholipid metabolism. Functionally, catalyzes the reduction of the glycolytic intermediate dihydroxyacetone phosphate (DHAP) to sn-glycerol 3-phosphate (G3P), the key precursor for phospholipid synthesis. This chain is Glycerol-3-phosphate dehydrogenase [NAD(P)+], found in Geobacillus thermodenitrificans (strain NG80-2).